The sequence spans 184 residues: Large ribosomal subunit protein uL6 (184 aa).

The protein belongs to the universal ribosomal protein uL6 family. As to quaternary structure, part of the 50S ribosomal subunit.

In terms of biological role, this protein binds to the 23S rRNA, and is important in its secondary structure. It is located near the subunit interface in the base of the L7/L12 stalk, and near the tRNA binding site of the peptidyltransferase center. This Salinibacter ruber (strain DSM 13855 / M31) protein is Large ribosomal subunit protein uL6.